A 985-amino-acid polypeptide reads, in one-letter code: Exocyst complex component 4 (985 aa).

Residues 36-70 adopt a coiled-coil conformation; it reads SETTEERQKEKQKIEAEFKRSDLRLNELVSRHDQQ. 5 positions are modified to phosphoserine: Ser-235, Ser-456, Ser-459, Ser-682, and Ser-686. The segment at 434-480 is disordered; that stretch reads DKSSHVGTSNNSDAFKEHRRNASDASVDDNLAGQLGGSGKGSTSGLF.

Belongs to the SEC8 family. As to quaternary structure, the exocyst complex is composed of Sec3/Exoc1, Sec5/Exoc2, Sec6/Exoc3, Sec8/Exoc4, Sec10/Exoc5, Sec15/Exoc6, exo70/Exoc7 and Exo84/Exoc8. As to expression, abundant in the embryonic and larval glutamatergic neuromuscular junctions (NMJs), pre and postsynaptically.

Component of the exocyst complex involved in the docking of exocytic vesicles with fusion sites on the plasma membrane. Involved in regulation of synaptic microtubule formation, and also regulation of synaptic growth and glutamate receptor trafficking. Does not appear to be required for basal neurotransmission. The chain is Exocyst complex component 4 from Drosophila melanogaster (Fruit fly).